A 341-amino-acid polypeptide reads, in one-letter code: Glycerol-3-phosphate dehydrogenase [NAD(P)+] (341 aa).

NADPH contacts are provided by S17, W18, R37, and K112. 2 residues coordinate sn-glycerol 3-phosphate: K112 and G140. A144 is a binding site for NADPH. Sn-glycerol 3-phosphate-binding residues include K195, D248, S258, R259, and N260. The Proton acceptor role is filled by K195. R259 lines the NADPH pocket. The NADPH site is built by V283 and E285.

This sequence belongs to the NAD-dependent glycerol-3-phosphate dehydrogenase family.

It is found in the cytoplasm. It catalyses the reaction sn-glycerol 3-phosphate + NAD(+) = dihydroxyacetone phosphate + NADH + H(+). The enzyme catalyses sn-glycerol 3-phosphate + NADP(+) = dihydroxyacetone phosphate + NADPH + H(+). Its pathway is membrane lipid metabolism; glycerophospholipid metabolism. Functionally, catalyzes the reduction of the glycolytic intermediate dihydroxyacetone phosphate (DHAP) to sn-glycerol 3-phosphate (G3P), the key precursor for phospholipid synthesis. In Mycobacterium avium (strain 104), this protein is Glycerol-3-phosphate dehydrogenase [NAD(P)+].